A 101-amino-acid chain; its full sequence is Chaperone modulatory protein CbpM (101 aa).

This sequence belongs to the CbpM family.

Functionally, interacts with CbpA and inhibits both the DnaJ-like co-chaperone activity and the DNA binding activity of CbpA. Together with CbpA, modulates the activity of the DnaK chaperone system. Does not inhibit the co-chaperone activity of DnaJ. The protein is Chaperone modulatory protein CbpM of Escherichia coli O1:K1 / APEC.